We begin with the raw amino-acid sequence, 585 residues long: Glucose oxidase-like protein fsoC (585 aa).

Ala-104 serves as a coordination point for FAD. His-521 (proton donor) is an active-site residue. The active-site Proton acceptor is His-564.

This sequence belongs to the GMC oxidoreductase family. In terms of assembly, monomer. FAD is required as a cofactor.

Glucose oxidase-like protein; part of the gene cluster that mediates the biosynthesis of the enfumafungin-type antibiotic fuscoatroside. Four enzymes are sufficient to produce fuscoatroside: the terpene cyclase-glycosyl transferase fusion protein fsoAthe cytochrome P450 monoxygenases fsoD and fsoE, and the acetyltransferase fsoF; the cytochrome P450 monooxygenase fsoB and the glucose oxidase-like protein fsoC do not seem to play a role in biosynthesis of fuscoatroside. Its function is as follows. Glucose oxidase; part of the gene cluster that mediates the biosynthesis of the enfumafungin-type antibiotic, fuscoatroside. This is Glucose oxidase-like protein fsoC from Humicola fuscoatra.